Reading from the N-terminus, the 331-residue chain is Lipoyl synthase (331 aa).

[4Fe-4S] cluster contacts are provided by cysteine 74, cysteine 79, cysteine 85, cysteine 100, cysteine 104, cysteine 107, and serine 314. Residues 85–303 (CFGKGTATFM…ETEAYKMGFT (219 aa)) enclose the Radical SAM core domain.

The protein belongs to the radical SAM superfamily. Lipoyl synthase family. [4Fe-4S] cluster is required as a cofactor.

Its subcellular location is the cytoplasm. It catalyses the reaction [[Fe-S] cluster scaffold protein carrying a second [4Fe-4S](2+) cluster] + N(6)-octanoyl-L-lysyl-[protein] + 2 oxidized [2Fe-2S]-[ferredoxin] + 2 S-adenosyl-L-methionine + 4 H(+) = [[Fe-S] cluster scaffold protein] + N(6)-[(R)-dihydrolipoyl]-L-lysyl-[protein] + 4 Fe(3+) + 2 hydrogen sulfide + 2 5'-deoxyadenosine + 2 L-methionine + 2 reduced [2Fe-2S]-[ferredoxin]. It functions in the pathway protein modification; protein lipoylation via endogenous pathway; protein N(6)-(lipoyl)lysine from octanoyl-[acyl-carrier-protein]: step 2/2. Catalyzes the radical-mediated insertion of two sulfur atoms into the C-6 and C-8 positions of the octanoyl moiety bound to the lipoyl domains of lipoate-dependent enzymes, thereby converting the octanoylated domains into lipoylated derivatives. This chain is Lipoyl synthase, found in Leptothrix cholodnii (strain ATCC 51168 / LMG 8142 / SP-6) (Leptothrix discophora (strain SP-6)).